We begin with the raw amino-acid sequence, 263 residues long: uncharacterized protein (263 aa).

The signal sequence occupies residues 1–22 (MRYLKRVVLYRIVMVLSVFIIG). C23 carries the N-palmitoyl cysteine lipid modification. A lipid anchor (S-diacylglycerol cysteine) is attached at C23.

The protein belongs to the staphylococcal tandem lipoprotein family.

The protein localises to the cell membrane. This is an uncharacterized protein from Staphylococcus aureus (strain bovine RF122 / ET3-1).